The following is a 103-amino-acid chain: UPF0473 protein SGO_2040 (103 aa).

The protein belongs to the UPF0473 family.

The sequence is that of UPF0473 protein SGO_2040 from Streptococcus gordonii (strain Challis / ATCC 35105 / BCRC 15272 / CH1 / DL1 / V288).